Consider the following 382-residue polypeptide: Na(+)/H(+) antiporter NhaA 2 (382 aa).

The next 11 membrane-spanning stretches (helical) occupy residues phenylalanine 8 to isoleucine 28, leucine 49 to leucine 69, alanine 87 to phenylalanine 107, leucine 115 to leucine 135, isoleucine 146 to phenylalanine 166, serine 169 to methionine 189, phenylalanine 209 to isoleucine 229, tryptophan 252 to glycine 272, valine 286 to valine 306, valine 325 to alanine 345, and glutamate 353 to leucine 373.

This sequence belongs to the NhaA Na(+)/H(+) (TC 2.A.33) antiporter family.

It is found in the cell inner membrane. It carries out the reaction Na(+)(in) + 2 H(+)(out) = Na(+)(out) + 2 H(+)(in). In terms of biological role, na(+)/H(+) antiporter that extrudes sodium in exchange for external protons. This chain is Na(+)/H(+) antiporter NhaA 2, found in Klebsiella pneumoniae subsp. pneumoniae (strain ATCC 700721 / MGH 78578).